A 96-amino-acid chain; its full sequence is Co-chaperonin GroES (96 aa).

This sequence belongs to the GroES chaperonin family. Heptamer of 7 subunits arranged in a ring. Interacts with the chaperonin GroEL.

It is found in the cytoplasm. Together with the chaperonin GroEL, plays an essential role in assisting protein folding. The GroEL-GroES system forms a nano-cage that allows encapsulation of the non-native substrate proteins and provides a physical environment optimized to promote and accelerate protein folding. GroES binds to the apical surface of the GroEL ring, thereby capping the opening of the GroEL channel. The chain is Co-chaperonin GroES from Teredinibacter turnerae (strain ATCC 39867 / T7901).